The following is a 415-amino-acid chain: Gamma-glutamyl phosphate reductase (415 aa).

Belongs to the gamma-glutamyl phosphate reductase family.

It localises to the cytoplasm. It catalyses the reaction L-glutamate 5-semialdehyde + phosphate + NADP(+) = L-glutamyl 5-phosphate + NADPH + H(+). The protein operates within amino-acid biosynthesis; L-proline biosynthesis; L-glutamate 5-semialdehyde from L-glutamate: step 2/2. Catalyzes the NADPH-dependent reduction of L-glutamate 5-phosphate into L-glutamate 5-semialdehyde and phosphate. The product spontaneously undergoes cyclization to form 1-pyrroline-5-carboxylate. The chain is Gamma-glutamyl phosphate reductase from Clostridium perfringens (strain SM101 / Type A).